The sequence spans 250 residues: Endonuclease NucS (250 aa).

The protein belongs to the NucS endonuclease family.

It localises to the cytoplasm. In terms of biological role, cleaves both 3' and 5' ssDNA extremities of branched DNA structures. The chain is Endonuclease NucS from Sulfolobus acidocaldarius (strain ATCC 33909 / DSM 639 / JCM 8929 / NBRC 15157 / NCIMB 11770).